Here is a 122-residue protein sequence, read N- to C-terminus: uncharacterized protein (122 aa).

An N-terminal signal peptide occupies residues 1 to 20; the sequence is MGFHFCIWIIFLLPPPCKKC.

Its subcellular location is the secreted. This is an uncharacterized protein from Homo sapiens (Human).